The primary structure comprises 226 residues: Urease accessory protein UreG (226 aa).

The segment at 1-26 (MPPHFLDGQPHGHTDRPRRVRQPGEP) is disordered. 33–40 (GPVGSGKT) lines the GTP pocket.

This sequence belongs to the SIMIBI class G3E GTPase family. UreG subfamily. As to quaternary structure, homodimer. UreD, UreF and UreG form a complex that acts as a GTP-hydrolysis-dependent molecular chaperone, activating the urease apoprotein by helping to assemble the nickel containing metallocenter of UreC. The UreE protein probably delivers the nickel.

The protein resides in the cytoplasm. Its function is as follows. Facilitates the functional incorporation of the urease nickel metallocenter. This process requires GTP hydrolysis, probably effectuated by UreG. The sequence is that of Urease accessory protein UreG from Mycolicibacterium vanbaalenii (strain DSM 7251 / JCM 13017 / BCRC 16820 / KCTC 9966 / NRRL B-24157 / PYR-1) (Mycobacterium vanbaalenii).